Reading from the N-terminus, the 214-residue chain is MTSFVLASASPARLAVLRSAGVEPIVRVSGVDEDAVIAALGADAAPEHVVTELARAKASDVLPVLARDGISDAVVVGCDSMLLIDGSLQGKPGTVDVARARWSAMAGRSATLLTGHSVLRIAEGAVVGDAHDHSATVVHFASPPDADLEAYLATGEPLQVAGAFTLDSLGGWFVDRIEGDPSSVIGIGLPLVRRLLAEVGVGVAELWASSGRVD.

Catalysis depends on Asp79, which acts as the Proton acceptor.

This sequence belongs to the Maf family. The cofactor is a divalent metal cation.

The protein resides in the cytoplasm. The enzyme catalyses a ribonucleoside 5'-triphosphate + H2O = a ribonucleoside 5'-phosphate + diphosphate + H(+). It catalyses the reaction a 2'-deoxyribonucleoside 5'-triphosphate + H2O = a 2'-deoxyribonucleoside 5'-phosphate + diphosphate + H(+). In terms of biological role, nucleoside triphosphate pyrophosphatase. May have a dual role in cell division arrest and in preventing the incorporation of modified nucleotides into cellular nucleic acids. This chain is Nucleoside triphosphate pyrophosphatase, found in Rhodococcus jostii (strain RHA1).